The sequence spans 320 residues: Ferrochelatase (320 aa).

His194 and Glu272 together coordinate Fe cation.

It belongs to the ferrochelatase family.

Its subcellular location is the cytoplasm. It catalyses the reaction heme b + 2 H(+) = protoporphyrin IX + Fe(2+). It functions in the pathway porphyrin-containing compound metabolism; protoheme biosynthesis; protoheme from protoporphyrin-IX: step 1/1. Catalyzes the ferrous insertion into protoporphyrin IX. The sequence is that of Ferrochelatase from Desulfotalea psychrophila (strain LSv54 / DSM 12343).